We begin with the raw amino-acid sequence, 542 residues long: Neurofilament light polypeptide (542 aa).

N-acetylserine is present on S2. The tract at residues 2-93 (SSFSYEPYFS…KSIRTQEKAQ (92 aa)) is head. Residue T21 is glycosylated (O-linked (GlcNAc) threonine). R23 is subject to Asymmetric dimethylarginine; alternate. An Omega-N-methylarginine; alternate modification is found at R23. An O-linked (GlcNAc) serine glycan is attached at S27. R30 carries the post-translational modification Omega-N-methylarginine. Y43 is subject to Phosphotyrosine. Residues S56, S67, and S103 each carry the phosphoserine modification. The 312-residue stretch at 90 to 401 (EKAQLQDLND…KLLEGEETRL (312 aa)) folds into the IF rod domain. Residues 94-125 (LQDLNDRFASFIERVHELEQQNKVLEAELLVL) are coil 1A. Residues 126-138 (RQKHSEPSRFRAL) form a linker 1 region. The segment at 139–234 (YEQEIRDLRL…KVHEEEIAEL (96 aa)) is coil 1B. The interval 235–253 (QAQIQYAQISVEMDVSSKP) is linker 12. Positions 254–272 (DLSAALKDIRAQYEKLAAK) are coil 2A. A linker 2 region spans residues 273–281 (NMQNAEEWF). The tract at residues 282–397 (KSRFTVLTES…AAYRKLLEGE (116 aa)) is coil 2B. An epitope; recognized by IF-specific monoclonal antibody region spans residues 382-392 (ALDIEIAAYRK). Residues 398 to 444 (ETRLSFTSVGSITSGYSQSSQVFGRSAYSGLQSSSYLMSARAFPAYY) are tail, subdomain A. The interval 398 to 542 (ETRLSFTSVG…GEEQAAKKKD (145 aa)) is tail. Positions 445–542 (TSHVQEEQSE…GEEQAAKKKD (98 aa)) are tail, subdomain B (acidic). A disordered region spans residues 451–542 (EQSEVEETIE…GEEQAAKKKD (92 aa)). Position 453 is a phosphoserine (S453). Basic and acidic residues predominate over residues 460–471 (EATKAEEAKDEP). A compositionally biased stretch (acidic residues) spans 472 to 527 (PSEGEAEEEEKEKEEGEEEEGAEEEEAAKDESEDAKEEEGGEGEEEDTKESEEEEK). Phosphoserine occurs at positions 473 and 503. Phosphothreonine is present on T519. Phosphoserine is present on residues S522 and S531. A compositionally biased stretch (basic and acidic residues) spans 528 to 542 (KEESAGEEQAAKKKD).

Belongs to the intermediate filament family. As to quaternary structure, forms homodimers (in vitro). Forms heterodimers with NEFH or NEFM; which can further hetero-oligomerize (in vitro). Forms heterodimers with INA (in vitro). Interacts with ARHGEF28. Interacts with TRIM2. O-glycosylated; contains three N-acetylglucosamine side chains. Post-translationally, phosphorylated in the head and rod regions by the PKC kinase PKN1, leading to the inhibition of polymerization. In terms of processing, ubiquitinated in the presence of TRIM2 and UBE2D1. As to expression, expressed in the dorsal root ganglion neurons (at protein level).

The protein resides in the cell projection. It is found in the axon. Its subcellular location is the cytoplasm. The protein localises to the cytoskeleton. Functionally, neurofilaments usually contain three intermediate filament proteins: NEFL, NEFM, and NEFH which are involved in the maintenance of neuronal caliber. May additionally cooperate with the neuronal intermediate filament proteins PRPH and INA to form neuronal filamentous networks. The polypeptide is Neurofilament light polypeptide (Nefl) (Rattus norvegicus (Rat)).